We begin with the raw amino-acid sequence, 511 residues long: Glucans biosynthesis protein G (511 aa).

The signal sequence occupies residues 1–22 (MMKMRWLSAAVMLTLYTSSSWA).

Belongs to the OpgD/OpgG family.

The protein resides in the periplasm. It participates in glycan metabolism; osmoregulated periplasmic glucan (OPG) biosynthesis. In terms of biological role, involved in the biosynthesis of osmoregulated periplasmic glucans (OPGs). The protein is Glucans biosynthesis protein G of Escherichia coli O8 (strain IAI1).